Here is a 165-residue protein sequence, read N- to C-terminus: NADH-ubiquinone oxidoreductase chain 6 (165 aa).

A run of 4 helical transmembrane segments spans residues methionine 1–leucine 21, serine 47–tyrosine 67, glycine 83–phenylalanine 103, and glycine 130–isoleucine 150.

Belongs to the complex I subunit 6 family.

The protein resides in the mitochondrion membrane. It carries out the reaction a ubiquinone + NADH + 5 H(+)(in) = a ubiquinol + NAD(+) + 4 H(+)(out). In terms of biological role, core subunit of the mitochondrial membrane respiratory chain NADH dehydrogenase (Complex I) that is believed to belong to the minimal assembly required for catalysis. Complex I functions in the transfer of electrons from NADH to the respiratory chain. The immediate electron acceptor for the enzyme is believed to be ubiquinone. This Strongylocentrotus purpuratus (Purple sea urchin) protein is NADH-ubiquinone oxidoreductase chain 6 (ND6).